Here is a 188-residue protein sequence, read N- to C-terminus: Chitin synthase 1 (188 aa).

The protein belongs to the chitin synthase family. Class I subfamily.

The protein resides in the cell membrane. The enzyme catalyses [(1-&gt;4)-N-acetyl-beta-D-glucosaminyl](n) + UDP-N-acetyl-alpha-D-glucosamine = [(1-&gt;4)-N-acetyl-beta-D-glucosaminyl](n+1) + UDP + H(+). In terms of biological role, polymerizes chitin, a structural polymer of the cell wall and septum, by transferring the sugar moiety of UDP-GlcNAc to the non-reducing end of the growing chitin polymer. This Ajellomyces dermatitidis (Blastomyces dermatitidis) protein is Chitin synthase 1 (CHS1).